The chain runs to 163 residues: Shikimate kinase (163 aa).

Residue 10–15 participates in ATP binding; sequence GVGKTT. Thr-14 is a binding site for Mg(2+). 3 residues coordinate substrate: Asp-28, Arg-52, and Gly-75. Arg-116 contacts ATP. Arg-134 provides a ligand contact to substrate. Residue Arg-151 coordinates ATP.

This sequence belongs to the shikimate kinase family. In terms of assembly, monomer. Requires Mg(2+) as cofactor.

Its subcellular location is the cytoplasm. It catalyses the reaction shikimate + ATP = 3-phosphoshikimate + ADP + H(+). It participates in metabolic intermediate biosynthesis; chorismate biosynthesis; chorismate from D-erythrose 4-phosphate and phosphoenolpyruvate: step 5/7. Its function is as follows. Catalyzes the specific phosphorylation of the 3-hydroxyl group of shikimic acid using ATP as a cosubstrate. The sequence is that of Shikimate kinase from Streptococcus pyogenes serotype M4 (strain MGAS10750).